Here is a 327-residue protein sequence, read N- to C-terminus: Ankyrin repeat domain-containing protein SOWAHD (327 aa).

The tract at residues 1 to 31 is disordered; that stretch reads MAQALEDGNPLPKASNRPAESEAPSDPQIKD. 3 ANK repeats span residues 112–141, 147–162, and 186–216; these read CLEP…AEPS, DPIT…AKHG, and PGSG…LGAD. The disordered stretch occupies residues 251–311; sequence ERDRKRENAN…EKKASSTQEG (61 aa). The span at 260-275 shows a compositional bias: low complexity; sequence NNNSSRTTTTTTTTSR. A compositionally biased stretch (basic and acidic residues) spans 292–305; sequence HYKEASQPVKEKKA.

Belongs to the SOWAH family.

The sequence is that of Ankyrin repeat domain-containing protein SOWAHD (Sowahd) from Mus musculus (Mouse).